The sequence spans 460 residues: MAKTGVFDSDPTAIAKAKELKREMKKLLIKIDDEDDLGVQTIDQLQDALSALREATMRKMAKSSSLEMLETVSCPEEFRCPLSNELMRDPVVLASGQTYDKLFIQKWLSSGNRTCPKTQQVLPHTALTPNLLIREMISKWCKKNGLETKSQYHPNLVNEDETVTRSDREIFNSLLCKVSSSNLQDQKSAAKELRLLTRKGTEFRALFGESPDEITRLVNPLLHGSNPDEKLQEDVVTTLLNISIHDDSNKKLVCENPNVIPLLIDALRRGTVATRSNAAAAIFTLSALDSNKVLIGKSGILKPLIDLLEEGNPLAIKDVAAAIFTLCIAHENRSRAVRDGAVRVLGKKISNGLYVDELLAILAMLVTHWKAVEELGELGGVSWLLKITRESECKRNKENAIVILHTICFSDRTKWKEIKEEENAHGTITKLSREGTSRAQRKANGILDRLRKAMNLTHTA.

A U-box domain is found at 73-147 (SCPEEFRCPL…SKWCKKNGLE (75 aa)). ARM repeat units lie at residues 201-244 (TEFR…NISI), 248-287 (SNKKLVCENPNVIPLLIDALRRGTVATRSNAAAAIFTLSA), and 289-328 (DSNKVLIGKSGILKPLIDLLEEGNPLAIKDVAAAIFTLCI).

As to quaternary structure, binds to SD11, SD16, SD17, SD18, SD113, SD129 and SD25. Phosphorylated by SD1-6 and SD1-7.

It localises to the nucleus. The protein resides in the cell membrane. The enzyme catalyses S-ubiquitinyl-[E2 ubiquitin-conjugating enzyme]-L-cysteine + [acceptor protein]-L-lysine = [E2 ubiquitin-conjugating enzyme]-L-cysteine + N(6)-ubiquitinyl-[acceptor protein]-L-lysine.. It participates in protein modification; protein ubiquitination. Functionally, functions as an E3 ubiquitin ligase. May be involved in the abscisic acid-mediated signaling pathway, at least during germination. This chain is U-box domain-containing protein 9 (PUB9), found in Arabidopsis thaliana (Mouse-ear cress).